Consider the following 331-residue polypeptide: CRISPR-associated endonuclease Cas1 (331 aa).

The Mn(2+) site is built by Glu-158, His-223, and Asp-238.

Belongs to the CRISPR-associated endonuclease Cas1 family. In terms of assembly, homodimer, forms a heterotetramer with a Cas2 homodimer. Requires Mg(2+) as cofactor. It depends on Mn(2+) as a cofactor.

In terms of biological role, CRISPR (clustered regularly interspaced short palindromic repeat), is an adaptive immune system that provides protection against mobile genetic elements (viruses, transposable elements and conjugative plasmids). CRISPR clusters contain spacers, sequences complementary to antecedent mobile elements, and target invading nucleic acids. CRISPR clusters are transcribed and processed into CRISPR RNA (crRNA). Acts as a dsDNA endonuclease. Involved in the integration of spacer DNA into the CRISPR cassette. Plasmid targeted by CRISPR locus P1 transform wild-type cells very poorly. This Haloferax volcanii (strain ATCC 29605 / DSM 3757 / JCM 8879 / NBRC 14742 / NCIMB 2012 / VKM B-1768 / DS2) (Halobacterium volcanii) protein is CRISPR-associated endonuclease Cas1.